A 416-amino-acid chain; its full sequence is CCA-adding enzyme (416 aa).

ATP-binding residues include Ser-42 and Lys-45. The CTP site is built by Ser-42 and Lys-45. Mg(2+) contacts are provided by Asp-54, Asp-56, and Asp-107. Residues His-130, Lys-150, and Tyr-159 each contribute to the ATP site. Residues His-130, Lys-150, and Tyr-159 each coordinate CTP.

It belongs to the tRNA nucleotidyltransferase/poly(A) polymerase family. Archaeal CCA-adding enzyme subfamily. In terms of assembly, homodimer. Mg(2+) is required as a cofactor.

The catalysed reaction is a tRNA precursor + 2 CTP + ATP = a tRNA with a 3' CCA end + 3 diphosphate. It carries out the reaction a tRNA with a 3' CCA end + 2 CTP + ATP = a tRNA with a 3' CCACCA end + 3 diphosphate. In terms of biological role, catalyzes the addition and repair of the essential 3'-terminal CCA sequence in tRNAs without using a nucleic acid template. Adds these three nucleotides in the order of C, C, and A to the tRNA nucleotide-73, using CTP and ATP as substrates and producing inorganic pyrophosphate. tRNA 3'-terminal CCA addition is required both for tRNA processing and repair. Also involved in tRNA surveillance by mediating tandem CCA addition to generate a CCACCA at the 3' terminus of unstable tRNAs. While stable tRNAs receive only 3'-terminal CCA, unstable tRNAs are marked with CCACCA and rapidly degraded. This Sulfolobus acidocaldarius (strain ATCC 33909 / DSM 639 / JCM 8929 / NBRC 15157 / NCIMB 11770) protein is CCA-adding enzyme.